We begin with the raw amino-acid sequence, 111 residues long: uncharacterized protein (111 aa).

This is an uncharacterized protein from Saccharomyces cerevisiae (strain ATCC 204508 / S288c) (Baker's yeast).